The primary structure comprises 383 residues: 8-amino-7-oxononanoate synthase (383 aa).

Arg-21 contributes to the substrate binding site. 108-109 is a pyridoxal 5'-phosphate binding site; it reads GY. Residue His-133 coordinates substrate. Residues Ser-179, His-207, and Thr-233 each contribute to the pyridoxal 5'-phosphate site. Lys-236 is subject to N6-(pyridoxal phosphate)lysine. Thr-350 lines the substrate pocket.

This sequence belongs to the class-II pyridoxal-phosphate-dependent aminotransferase family. BioF subfamily. Homodimer. Requires pyridoxal 5'-phosphate as cofactor.

The enzyme catalyses 6-carboxyhexanoyl-[ACP] + L-alanine + H(+) = (8S)-8-amino-7-oxononanoate + holo-[ACP] + CO2. It functions in the pathway cofactor biosynthesis; biotin biosynthesis. Functionally, catalyzes the decarboxylative condensation of pimeloyl-[acyl-carrier protein] and L-alanine to produce 8-amino-7-oxononanoate (AON), [acyl-carrier protein], and carbon dioxide. This chain is 8-amino-7-oxononanoate synthase, found in Yersinia pseudotuberculosis serotype IB (strain PB1/+).